Reading from the N-terminus, the 420-residue chain is Probable pectate lyase C (420 aa).

The first 20 residues, 1–20, serve as a signal peptide directing secretion; it reads MKLSAPLLVSLAAFSQAVTA. 3 N-linked (GlcNAc...) asparagine glycosylation sites follow: N49, N165, and N202. The active site involves R205. In terms of domain architecture, EF-hand spans 262 to 297; sequence NANFHGYVDNNYYDPDKDGQLDGSELGVSSSNYGGM. Ca(2+)-binding residues include D275, D277, D279, Q281, and E286. Residues 357-395 are disordered; the sequence is ATMGGPGTLNGGTPAKDTDGDGIPDEAEKQLGTDPNTND. N-linked (GlcNAc...) asparagine glycosylation is present at N394.

Belongs to the polysaccharide lyase 1 family. Requires Ca(2+) as cofactor.

It localises to the secreted. The catalysed reaction is Eliminative cleavage of (1-&gt;4)-alpha-D-galacturonan to give oligosaccharides with 4-deoxy-alpha-D-galact-4-enuronosyl groups at their non-reducing ends.. Pectinolytic enzyme consist of four classes of enzymes: pectin lyase, polygalacturonase, pectin methylesterase and rhamnogalacturonase. Among pectinolytic enzymes, pectin lyase is the most important in depolymerization of pectin, since it cleaves internal glycosidic bonds of highly methylated pectins. Favors pectate, the anion, over pectin, the methyl ester. This Neosartorya fischeri (strain ATCC 1020 / DSM 3700 / CBS 544.65 / FGSC A1164 / JCM 1740 / NRRL 181 / WB 181) (Aspergillus fischerianus) protein is Probable pectate lyase C (plyC).